The primary structure comprises 354 residues: Elongation factor Ts (354 aa).

The involved in Mg(2+) ion dislocation from EF-Tu stretch occupies residues 81-84; it reads TDFV.

Belongs to the EF-Ts family.

It is found in the cytoplasm. Functionally, associates with the EF-Tu.GDP complex and induces the exchange of GDP to GTP. It remains bound to the aminoacyl-tRNA.EF-Tu.GTP complex up to the GTP hydrolysis stage on the ribosome. The sequence is that of Elongation factor Ts from Campylobacter fetus subsp. fetus (strain 82-40).